Reading from the N-terminus, the 102-residue chain is Aspartyl/glutamyl-tRNA(Asn/Gln) amidotransferase subunit C (102 aa).

The protein belongs to the GatC family. Heterotrimer of A, B and C subunits.

The enzyme catalyses L-glutamyl-tRNA(Gln) + L-glutamine + ATP + H2O = L-glutaminyl-tRNA(Gln) + L-glutamate + ADP + phosphate + H(+). The catalysed reaction is L-aspartyl-tRNA(Asn) + L-glutamine + ATP + H2O = L-asparaginyl-tRNA(Asn) + L-glutamate + ADP + phosphate + 2 H(+). In terms of biological role, allows the formation of correctly charged Asn-tRNA(Asn) or Gln-tRNA(Gln) through the transamidation of misacylated Asp-tRNA(Asn) or Glu-tRNA(Gln) in organisms which lack either or both of asparaginyl-tRNA or glutaminyl-tRNA synthetases. The reaction takes place in the presence of glutamine and ATP through an activated phospho-Asp-tRNA(Asn) or phospho-Glu-tRNA(Gln). This Bordetella bronchiseptica (strain ATCC BAA-588 / NCTC 13252 / RB50) (Alcaligenes bronchisepticus) protein is Aspartyl/glutamyl-tRNA(Asn/Gln) amidotransferase subunit C.